A 396-amino-acid chain; its full sequence is MKIKTGVGILALSALTTMMISAPALAKIEEGKLVIWINGDKGYNGLAEVGKKFEQDTGIKVTVEHPDKLEEKFPQVAATGDGPDIIFWAHDRFGGYAQSGLLAEVTPDKAFQDKLYPFTWDAVRYNGKLIAYPIAVEALSLIYNKDLVPNPPKTWEEIPALDKELKVKGKSAIMFNLQEPYFTWPLIAADGGYAFKFENGKYDVKDVGVDNAGAKAGLTFLIDMIKNKNMSADTDYSIAEAAFNKGETAMTINGPWAWSNIDKSKVNYGVTLLPTFKGKPSKPFVGVLSAGINAASPNKELAKEFLENYLLTDQGLEAVNKDKPLGAVALKSFQEQLAKDPRIAATMDNAQKGEIMPNIPQMSAFWYAVRTAVINAASGRQTVDAALKDAQSRITK.

Residues 1–26 (MKIKTGVGILALSALTTMMISAPALA) form the signal peptide.

It belongs to the bacterial solute-binding protein 1 family. In terms of assembly, the complex is composed of two ATP-binding proteins (MalK), two transmembrane proteins (MalG and MalF) and a solute-binding protein (MalE).

The protein resides in the periplasm. Its function is as follows. Part of the ABC transporter complex MalEFGK involved in maltose/maltodextrin import. Binds maltose and higher maltodextrins. This chain is Maltose/maltodextrin-binding periplasmic protein (malE), found in Salmonella typhimurium (strain LT2 / SGSC1412 / ATCC 700720).